A 376-amino-acid chain; its full sequence is Secreted LysM effector LysM9 (376 aa).

Positions 1-25 are cleaved as a signal peptide; sequence MGHFHLSNFIALIGILLVGPTATSG. Positions 41–89 constitute a LysM domain; the sequence is SKYVVQAGETCSAIAQAHSITTADIETYNAQSWAWTGCGQISQGDFICL. Residues 190 to 219 form a disordered region; sequence SSETSSSMTTSTSATTSVPTTTSTTTTTKT.

The protein belongs to the secreted LysM effector family.

The protein resides in the secreted. Functionally, secreted LysM effector that might have a role in sequestration of chitin oligosaccharides (breakdown products of fungal cell walls that are released during invasion and act as triggers of host immunity) to dampen host defense. This chain is Secreted LysM effector LysM9, found in Penicillium expansum (Blue mold rot fungus).